Here is a 431-residue protein sequence, read N- to C-terminus: Enolase (431 aa).

Residue Gln166 coordinates (2R)-2-phosphoglycerate. The Proton donor role is filled by Glu208. Residues Asp245, Glu289, and Asp316 each contribute to the Mg(2+) site. Residues Lys341, Arg370, Ser371, and Lys392 each contribute to the (2R)-2-phosphoglycerate site. The Proton acceptor role is filled by Lys341.

The protein belongs to the enolase family. Mg(2+) serves as cofactor.

It is found in the cytoplasm. Its subcellular location is the secreted. It localises to the cell surface. The catalysed reaction is (2R)-2-phosphoglycerate = phosphoenolpyruvate + H2O. It functions in the pathway carbohydrate degradation; glycolysis; pyruvate from D-glyceraldehyde 3-phosphate: step 4/5. Catalyzes the reversible conversion of 2-phosphoglycerate (2-PG) into phosphoenolpyruvate (PEP). It is essential for the degradation of carbohydrates via glycolysis. The polypeptide is Enolase (Ruminiclostridium cellulolyticum (strain ATCC 35319 / DSM 5812 / JCM 6584 / H10) (Clostridium cellulolyticum)).